Reading from the N-terminus, the 127-residue chain is Small ribosomal subunit protein uS13 (127 aa).

A disordered region spans residues 93–127 (RQGLPVRGQRTRTNGRTRRGRRVTVAGKKKAPAKK). Basic residues predominate over residues 101–127 (QRTRTNGRTRRGRRVTVAGKKKAPAKK).

This sequence belongs to the universal ribosomal protein uS13 family. As to quaternary structure, part of the 30S ribosomal subunit. Forms a loose heterodimer with protein S19. Forms two bridges to the 50S subunit in the 70S ribosome.

Its function is as follows. Located at the top of the head of the 30S subunit, it contacts several helices of the 16S rRNA. In the 70S ribosome it contacts the 23S rRNA (bridge B1a) and protein L5 of the 50S subunit (bridge B1b), connecting the 2 subunits; these bridges are implicated in subunit movement. Contacts the tRNAs in the A and P-sites. The sequence is that of Small ribosomal subunit protein uS13 from Crocosphaera subtropica (strain ATCC 51142 / BH68) (Cyanothece sp. (strain ATCC 51142)).